The sequence spans 396 residues: Elongation factor Tu (396 aa).

The tr-type G domain occupies lysine 10–valine 205. Positions glycine 19–threonine 26 are G1. Residue glycine 19–threonine 26 coordinates GTP. Threonine 26 contributes to the Mg(2+) binding site. The segment at glycine 62–asparagine 66 is G2. The segment at aspartate 83–glycine 86 is G3. GTP is bound by residues aspartate 83–histidine 87 and asparagine 138–aspartate 141. Residues asparagine 138 to aspartate 141 form a G4 region. The tract at residues serine 175 to leucine 177 is G5.

Belongs to the TRAFAC class translation factor GTPase superfamily. Classic translation factor GTPase family. EF-Tu/EF-1A subfamily. As to quaternary structure, monomer.

It is found in the cytoplasm. It catalyses the reaction GTP + H2O = GDP + phosphate + H(+). Its function is as follows. GTP hydrolase that promotes the GTP-dependent binding of aminoacyl-tRNA to the A-site of ribosomes during protein biosynthesis. The sequence is that of Elongation factor Tu from Rhodococcus jostii (strain RHA1).